The following is a 170-amino-acid chain: Cathelicidin antimicrobial peptide (170 aa).

The first 30 residues, Met-1–Gly-30, serve as a signal peptide directing secretion. Positions Arg-31 to Lys-131 are cleaved as a propeptide — cathelin-like domain (CLD). The segment at Arg-31–Lys-131 is cathelin-like domain (CLD). Disulfide bonds link Cys-86–Cys-97 and Cys-108–Cys-125. The active core stretch occupies residues Leu-150–Gly-162.

The protein belongs to the cathelicidin family. In terms of assembly, monomer, homodimer or homotrimer (in vitro). Oligomerizes as tetra- or hexamer in solution (in vitro). In terms of processing, proteolytically cleaved by proteinase PRTN3 into antibacterial peptide LL-37. Proteolytically cleaved by cathepsin CTSG and neutrophil elastase ELANE. Resistant to proteolytic degradation in solution, and when bound to both zwitterionic (mimicking mammalian membranes) and negatively charged membranes (mimicking bacterial membranes). Post-translationally, after secretion onto the skin surface, the CAMP gene product is processed by a serine protease-dependent mechanism into multiple novel antimicrobial peptides distinct from and shorter than cathelicidin LL-37. These peptides show enhanced antimicrobial action, acquiring the ability to kill skin pathogens such as S.aureus, E.coli and C.albicans. These peptides have lost the ability to stimulate CXCL8/IL8 release from keratinocytes. The peptides act synergistically, killing bacteria at lower concentrations when present together, and maintain activity at increased salt condition.

The protein localises to the secreted. Its subcellular location is the vesicle. Antimicrobial protein that is an integral component of the innate immune system. Binds to bacterial lipopolysaccharides (LPS). Acts via neutrophil N-formyl peptide receptors to enhance the release of CXCL2. Postsecretory processing generates multiple cathelicidin antimicrobial peptides with various lengths which act as a topical antimicrobial defense in sweat on skin. The unprocessed precursor form, cathelicidin antimicrobial peptide, inhibits the growth of Gram-negative E.coli and E.aerogenes with efficiencies comparable to that of the mature peptide LL-37 (in vitro). Its function is as follows. Antimicrobial peptide that is an integral component of the innate immune system. Binds to bacterial lipopolysaccharides (LPS). Causes membrane permeabilization by forming transmembrane pores (in vitro). Causes lysis of E.coli. Exhibits antimicrobial activity against Gram-negative bacteria such as P.aeruginosa, S.typhimurium, E.aerogenes, E.coli and P.syringae, Gram-positive bacteria such as L.monocytogenes, S.epidermidis, S.pyogenes and S.aureus, as well as vancomycin-resistant enterococci (in vitro). Exhibits antimicrobial activity against methicillin-resistant S.aureus, P.mirabilis, and C.albicans in low-salt media, but not in media containing 100 mM NaCl (in vitro). Forms chiral supramolecular assemblies with quinolone signal (PQS) molecules of P.aeruginosa, which may lead to interference of bacterial quorum signaling and perturbance of bacterial biofilm formation. May form supramolecular fiber-like assemblies on bacterial membranes. Induces cytokine and chemokine producation as well as TNF/TNFA and CSF2/GMCSF production in normal human keratinocytes. Exhibits hemolytic activity against red blood cells. Functionally, exhibits antimicrobial activity against E.coli and B.megaterium (in vitro). The chain is Cathelicidin antimicrobial peptide from Saguinus oedipus (Cotton-top tamarin).